The primary structure comprises 56 residues: Large ribosomal subunit protein bL33 (56 aa).

Belongs to the bacterial ribosomal protein bL33 family.

In Haemophilus influenzae (strain 86-028NP), this protein is Large ribosomal subunit protein bL33.